Consider the following 358-residue polypeptide: Tripartite motif-containing protein 54 (358 aa).

The RING-type zinc finger occupies 26–82 (CPICLEMFSKPVVILPCQHNLCRKCANDVFQASNPLWQSRGSTTVSSGGRFRCPSCR). The segment at 121–163 (EQHLMCEEHEEEKINIYCLSCEVPTCSLCKVFGAHKDCEVAPL) adopts a B box-type zinc-finger fold. C126, H129, C149, and H155 together coordinate Zn(2+). The segment at 168-211 (KRQKSELSDGIAMLVAGNDRVQAVITQMEEVCQTIEDNSRRQKQ) is mediates microtubule-binding and homooligomerization. Positions 194-258 (QMEEVCQTIE…LIRQYGDHLE (65 aa)) form a coiled coil. Residues 271 to 329 (MEEPQMALYLQQAKELINKVGAMSKVELAGRPEPGYESMEQFTVSVEHVAEMLRTIDFQ) form the COS domain. Residues 326-358 (IDFQPGASGEEEEVAPDGDEGSAGQEEERPDGP) form a disordered region. The segment covering 334–345 (GEEEEVAPDGDE) has biased composition (acidic residues).

In terms of assembly, homooligomer and heterooligomer. Interacts with TRIM63 and probably with TRIM55. Interacts with tubulin.

The protein resides in the cytoplasm. It localises to the cytoskeleton. The protein localises to the myofibril. It is found in the sarcomere. Its subcellular location is the z line. In terms of biological role, may bind and stabilize microtubules during myotubes formation. The protein is Tripartite motif-containing protein 54 (TRIM54) of Pongo abelii (Sumatran orangutan).